The following is a 229-amino-acid chain: Allatostatin-A (229 aa).

The signal sequence occupies residues 1 to 18; it reads MLSTSLPVCFLVIGAALC. A propeptide spanning residues 19–48 is cleaved from the precursor; that stretch reads APERMQNDPDPHDSTAQGSDNHSDHIAPLA. The tract at residues 23 to 46 is disordered; it reads MQNDPDPHDSTAQGSDNHSDHIAP. The residue at position 58 (L58) is a Leucine amide. Positions 62–80 are excised as a propeptide; it reads AYSYVSEYKRLPVYNFGLG. L90 carries the post-translational modification Leucine amide. Positions 94 to 130 are excised as a propeptide; that stretch reads SVDEDQTNDDQQQIMNNDLDQAALAEFFDQYDDAGYE. At L140 the chain carries Leucine amide. The propeptide occupies 144-152; it reads FADDDTSEE. L162, L173, L184, L196, and L210 each carry leucine amide. The propeptide occupies 214-229; the sequence is SADDASTEDSDNYFDV.

This sequence belongs to the allatostatin family. As to expression, allatostatin-A-1: Expressed in antennal lobe (AL), corpora cardiaca (CC), corpora allata (CA) and gnathal ganglion (GNG) (at protein level). Expression in AL and GNG detected in most animals, in CC and CA in some animals (at protein level). Allatostatin-A-3: Expressed in antennal lobe (AL), corpora cardiaca (CC), corpora allata (CA) and gnathal ganglion (GNG) (at protein level). Expression in AL detected in all animals, in GNG, CC and CA in most animals (at protein level). Allatostatin-A-4: Expressed in antennal lobe (AL), corpora cardiaca (CC), corpora allata (CA) and gnathal ganglion (GNG) in all animals (at protein level). Allatostatin-A-5: Expressed in antennal lobe (AL), corpora cardiaca (CC), corpora allata (CA) and gnathal ganglion (GNG) in all animals (at protein level). Allatostatin-A-6: Expressed in antennal lobe (AL) and gnathal ganglion (GNG) (at protein level). Expression in AL detected in some animals, in GNG in few animals (at protein level). Not expressed in corpora cardiaca (CC) and corpora allata (CA) (at protein level). Allatostatin-A-7: Expressed in antennal lobe (AL), corpora cardiaca (CC), corpora allata (CA) and gnathal ganglion (GNG) (at protein level). Expression in AL detected in all animals, in GNG, CC and CA in most animals (at protein level). Allatostatin-A-8: Expressed in antennal lobe (AL), corpora cardiaca (CC), corpora allata (CA) and gnathal ganglion (GNG) (at protein level). Expression in AL detected in all animals, in GNG, CC and CA in most animals (at protein level). Allatostatin-A-9: Expressed in antennal lobe (AL), corpora cardiaca (CC), corpora allata (CA) and gnathal ganglion (GNG) (at protein level). Expression in AL detected in all animals, in GNG in most animals and in CC and CA in some animals (at protein level).

It localises to the secreted. In terms of biological role, neuropeptide inhibitors of juvenile hormone synthesis and gut muscle contraction. The polypeptide is Allatostatin-A (Agrotis ipsilon (Black cutworm moth)).